A 326-amino-acid chain; its full sequence is Cathepsin L-like proteinase (326 aa).

Residues 1–15 (MRLFILAVLTVGVLG) form the signal peptide. A propeptide spans 16 to 106 (SNDDLWHQWK…HGVPYEANNR (91 aa)) (activation peptide). Pro-109 carries the post-translational modification 3-hydroxyproline; partial. 3 disulfides stabilise this stretch: Cys-129–Cys-172, Cys-163–Cys-204, and Cys-262–Cys-311. Cys-132 is an active-site residue. Position 196 is a 3-hydroxyproline; partial (Pro-196). Residues His-269 and Asn-289 contribute to the active site.

It belongs to the peptidase C1 family. Monomer. In terms of processing, contains cysteine residues involved in intramolecular disulfide bonding.

The protein localises to the secreted. With respect to regulation, strongly inhibited by Antipain, E64 and Leupeptin, and weakly inhibited by iodoacetic acid (IAA) and phenylmethylsulfonyl fluoride (PMSF). Requires the presence of dithiothreitol (DTT) for activity. Thiol protease. Probably involved in interaction with host tissues. Displays a similar activity to that of papain. Has high activity on Z-Phe-Arg-NHMec, but no activity on Z-Arg-NHMec. The chain is Cathepsin L-like proteinase from Fasciola hepatica (Liver fluke).